Here is an 85-residue protein sequence, read N- to C-terminus: Toxin Cll6 (85 aa).

A signal peptide spans 1 to 19; sequence MNSLLMIIGCLVLIGTVWT. In terms of domain architecture, LCN-type CS-alpha/beta spans 20–83; sequence KEGYLVNMKT…TWPLPGKSCS (64 aa). Disulfide bonds link Cys-31–Cys-82, Cys-35–Cys-58, Cys-44–Cys-63, and Cys-48–Cys-65. A Serine amide modification is found at Ser-83.

This sequence belongs to the long (4 C-C) scorpion toxin superfamily. Sodium channel inhibitor family. Beta subfamily. As to expression, expressed by the venom gland.

The protein localises to the secreted. In terms of biological role, beta toxins bind voltage-independently at site-4 of sodium channels (Nav) and shift the voltage of activation toward more negative potentials thereby affecting sodium channel activation and promoting spontaneous and repetitive firing. In Centruroides limpidus (Mexican scorpion), this protein is Toxin Cll6.